The primary structure comprises 509 residues: Carboxysome shell carbonic anhydrase (509 aa).

Zn(2+) is bound at residue Cys170. Asp172 serves as the catalytic Proton acceptor. Residues His238 and Cys249 each contribute to the Zn(2+) site.

This sequence belongs to the beta-class carbonic anhydrase family. CsoSCA subfamily. Homodimer. Requires Zn(2+) as cofactor.

It localises to the carboxysome. It carries out the reaction hydrogencarbonate + H(+) = CO2 + H2O. In terms of biological role, reversible hydration of carbon dioxide. Essential for photosynthetic carbon dioxide fixation, supplies CO(2) to RuBisCO (ribulose bisphosphate carboxylase, cbbL-cbbS) in the carboxysome. There are estimated to be 29 CsoSCA oligomers per carboxysome. The polypeptide is Carboxysome shell carbonic anhydrase (Prochlorococcus marinus subsp. pastoris (strain CCMP1986 / NIES-2087 / MED4)).